Consider the following 85-residue polypeptide: Makatoxin-2 (85 aa).

The signal sequence occupies residues 1-19; sequence MNYLIVISFALLLMTSVES. The region spanning 21–83 is the LCN-type CS-alpha/beta domain; it reads RDAYIADSEN…VPIRIPGPCR (63 aa). 4 disulfides stabilise this stretch: cysteine 31–cysteine 82, cysteine 35–cysteine 55, cysteine 41–cysteine 65, and cysteine 45–cysteine 67.

Belongs to the long (4 C-C) scorpion toxin superfamily. Sodium channel inhibitor family. Alpha subfamily. As to expression, expressed by the venom gland.

The protein resides in the secreted. Functionally, this protein markedly relaxes the rat carbachol-precontracted anococcygeus muscle. This relaxation is inhibited by the inhibitor of nitric oxide (NO) synthase, N-nitro-L-arginine methyl ester (L-NAME), suggesting that the response induced by this protein is NO-mediated. This is Makatoxin-2 from Olivierus martensii (Manchurian scorpion).